The chain runs to 123 residues: Large ribosomal subunit protein bL12 (123 aa).

The protein belongs to the bacterial ribosomal protein bL12 family. In terms of assembly, homodimer. Part of the ribosomal stalk of the 50S ribosomal subunit. Forms a multimeric L10(L12)X complex, where L10 forms an elongated spine to which 2 to 4 L12 dimers bind in a sequential fashion. Binds GTP-bound translation factors.

In terms of biological role, forms part of the ribosomal stalk which helps the ribosome interact with GTP-bound translation factors. Is thus essential for accurate translation. The sequence is that of Large ribosomal subunit protein bL12 from Aliarcobacter butzleri (strain RM4018) (Arcobacter butzleri).